Reading from the N-terminus, the 345-residue chain is Beta-2-glycoprotein 1 (345 aa).

The N-terminal stretch at 1–19 (MPPPALVLLLGFLCHVAIA) is a signal peptide. 4 consecutive Sushi domains span residues 21–81 (RTCP…KCMP), 82–139 (RVCP…VCAP), 140–202 (ITCP…ECRE), and 203–262 (VRCP…SCKA). 11 disulfide bridges follow: Cys-23-Cys-66, Cys-51-Cys-79, Cys-84-Cys-124, Cys-110-Cys-137, Cys-142-Cys-188, Cys-174-Cys-200, Cys-205-Cys-248, Cys-234-Cys-260, Cys-264-Cys-315, Cys-300-Cys-325, and Cys-307-Cys-345. Residue Thr-33 is glycosylated (O-linked (GalNAc...) threonine). N-linked (GlcNAc...) asparagine glycosylation is present at Asn-92. Asn-162, Asn-183, and Asn-193 each carry an N-linked (GlcNAc...) asparagine glycan. Asn-253 is a glycosylation site (N-linked (GlcNAc...) asparagine). Positions 263–345 (SCKLSIKRAT…KTDASDVKPC (83 aa)) are sushi-like.

Expressed by the liver and secreted in plasma.

The protein resides in the secreted. Functionally, binds to various kinds of negatively charged substances such as heparin, phospholipids, and dextran sulfate. May prevent activation of the intrinsic blood coagulation cascade by binding to phospholipids on the surface of damaged cells. This Bos taurus (Bovine) protein is Beta-2-glycoprotein 1 (APOH).